Consider the following 545-residue polypeptide: Phenylalanine--tRNA ligase beta subunit (545 aa).

Residues 268–343 (FLHKIQNVRE…MSIGYNNLEP (76 aa)) enclose the B5 domain. Positions 321, 327, 330, and 331 each coordinate Mg(2+).

This sequence belongs to the phenylalanyl-tRNA synthetase beta subunit family. Type 2 subfamily. In terms of assembly, tetramer of two alpha and two beta subunits. It depends on Mg(2+) as a cofactor.

The protein resides in the cytoplasm. The catalysed reaction is tRNA(Phe) + L-phenylalanine + ATP = L-phenylalanyl-tRNA(Phe) + AMP + diphosphate + H(+). This Saccharolobus islandicus (strain M.16.27) (Sulfolobus islandicus) protein is Phenylalanine--tRNA ligase beta subunit.